We begin with the raw amino-acid sequence, 479 residues long: Ribosomal protein uS12 methylthiotransferase RimO (479 aa).

Positions 1-34 are disordered; the sequence is MTVNTFDPSKASPVTHASDSASKTPEPNAVAAPS. Residues 15–25 are compositionally biased toward polar residues; that stretch reads THASDSASKTP. The MTTase N-terminal domain maps to 39 to 151; the sequence is NRVGFVSLGC…VMGAVHGYIP (113 aa). [4Fe-4S] cluster contacts are provided by C48, C84, C113, C184, C188, and C191. Positions 170-407 constitute a Radical SAM core domain; that stretch reads LTPRHYAYLK…METQQAISAA (238 aa). The TRAM domain occupies 410–476; sequence KQKVGYEMDV…DYDLTGIAVE (67 aa).

Belongs to the methylthiotransferase family. RimO subfamily. It depends on [4Fe-4S] cluster as a cofactor.

Its subcellular location is the cytoplasm. It carries out the reaction L-aspartate(89)-[ribosomal protein uS12]-hydrogen + (sulfur carrier)-SH + AH2 + 2 S-adenosyl-L-methionine = 3-methylsulfanyl-L-aspartate(89)-[ribosomal protein uS12]-hydrogen + (sulfur carrier)-H + 5'-deoxyadenosine + L-methionine + A + S-adenosyl-L-homocysteine + 2 H(+). Catalyzes the methylthiolation of an aspartic acid residue of ribosomal protein uS12. The chain is Ribosomal protein uS12 methylthiotransferase RimO from Saccharophagus degradans (strain 2-40 / ATCC 43961 / DSM 17024).